The sequence spans 90 residues: Small ribosomal subunit protein uS15 (90 aa).

Belongs to the universal ribosomal protein uS15 family. In terms of assembly, part of the 30S ribosomal subunit. Forms a bridge to the 50S subunit in the 70S ribosome, contacting the 23S rRNA.

Its function is as follows. One of the primary rRNA binding proteins, it binds directly to 16S rRNA where it helps nucleate assembly of the platform of the 30S subunit by binding and bridging several RNA helices of the 16S rRNA. Forms an intersubunit bridge (bridge B4) with the 23S rRNA of the 50S subunit in the ribosome. The chain is Small ribosomal subunit protein uS15 from Campylobacter fetus subsp. fetus (strain 82-40).